We begin with the raw amino-acid sequence, 2221 residues long: Autophagy-related protein 2 (2221 aa).

Disordered stretches follow at residues 108–135 (RHAGQGDRPMGSGPGHDSASDPIIPNPT), 148–181 (EEREELKAAISSQSQVLHRTSTSGSDDEEELGYG), 288–327 (FTAPTSPESTSPESPLQPKPSPPPSHVSSPPSEHASEEDT), 502–537 (PQPCADNQTSPVTSVPPSEASSSSSTSGSFNQDELS), 575–606 (PESTVVRDSHAHMHHENGRDVQHMDPDHEDDD), 629–648 (DDSPEAHRDPTDKELSRSSS), 672–758 (SMDE…RRSP), 963–996 (SSASSGKGPKKEAPKRPRGVHFEEFPPPAASERT), 1297–1318 (QPPHHDVQLPEKGGRSDTPSKP), and 1495–1514 (DMPEPPETTDSPDQNQGAGH). Residues 157-171 (ISSQSQVLHRTSTSG) show a composition bias toward polar residues. Over residues 291–301 (PTSPESTSPES) the composition is skewed to low complexity. Residues 302-312 (PLQPKPSPPPS) are compositionally biased toward pro residues. Residues 510 to 530 (TSPVTSVPPSEASSSSSTSGS) show a composition bias toward low complexity. Basic and acidic residues-rich tracts occupy residues 579–600 (VVRDSHAHMHHENGRDVQHMDP) and 632–644 (PEAHRDPTDKELS). Polar residues predominate over residues 741–756 (GSSQPSQSDGQAQSRR). Composition is skewed to basic and acidic residues over residues 971-986 (PKKEAPKRPRGVHFEE) and 1298-1311 (PPHHDVQLPEKGGR). Over residues 1502–1511 (TTDSPDQNQG) the composition is skewed to polar residues.

The protein belongs to the ATG2 family.

It localises to the preautophagosomal structure membrane. It is found in the endoplasmic reticulum membrane. It carries out the reaction a 1,2-diacyl-sn-glycero-3-phosphocholine(in) = a 1,2-diacyl-sn-glycero-3-phosphocholine(out). The enzyme catalyses a 1,2-diacyl-sn-glycero-3-phospho-L-serine(in) = a 1,2-diacyl-sn-glycero-3-phospho-L-serine(out). It catalyses the reaction a 1,2-diacyl-sn-glycero-3-phosphoethanolamine(in) = a 1,2-diacyl-sn-glycero-3-phosphoethanolamine(out). In terms of biological role, lipid transfer protein required for autophagosome completion and peroxisome degradation. Tethers the edge of the isolation membrane (IM) to the endoplasmic reticulum (ER) and mediates direct lipid transfer from ER to IM for IM expansion. Atg2 binds to the ER exit site (ERES), which is the membrane source for autophagosome formation, using basic residues in its N-terminal region (NR) and to the expanding edge of the IM through its C-terminal region. The latter binding is assisted by an atg18-PtdIns3P interaction. Atg2 then extracts phospholipids from the membrane source using its NR and transfers them to atg9 to the IM through its predicted beta-sheet-rich structure for membrane expansion. The sequence is that of Autophagy-related protein 2 (atg2) from Aspergillus niger (strain ATCC MYA-4892 / CBS 513.88 / FGSC A1513).